A 283-amino-acid chain; its full sequence is MKDMPTWIDEYHKGSRFGLNGKVLLKKNSKYQEILIIETDFYGKALMLDGCWMTSVRDEKYYHECLVHPALSSIDKKSHILIIGGGDGGTARECLKYSQVSKIDLVEIDEEVIKVSKTFLKEIGGGAWSDKRLAIHIDDGVKWVETTKDNSYDVIFIDCSDPSEFSNLLFTDSFYKECKRILTKKGILATQSESPESFENIHIHILKSLNKIFKLSETMYSFVPIYPSGIWSWTFASDEELNLSKVNYKEVMEIENNCDVWNLNFQNAAFKMMPNKIVKKLNS.

Residues 5–238 (PTWIDEYHKG…GIWSWTFASD (234 aa)) form the PABS domain. Position 32 (glutamine 32) interacts with S-methyl-5'-thioadenosine. Spermidine contacts are provided by histidine 63 and aspartate 87. S-methyl-5'-thioadenosine-binding positions include glutamate 107 and 139–140 (DG). Residue aspartate 158 is the Proton acceptor of the active site. Spermidine is bound at residue 158-161 (DCSD).

This sequence belongs to the spermidine/spermine synthase family. In terms of assembly, homodimer or homotetramer.

It is found in the cytoplasm. The enzyme catalyses S-adenosyl 3-(methylsulfanyl)propylamine + putrescine = S-methyl-5'-thioadenosine + spermidine + H(+). It participates in amine and polyamine biosynthesis; spermidine biosynthesis; spermidine from putrescine: step 1/1. Its function is as follows. Catalyzes the irreversible transfer of a propylamine group from the amino donor S-adenosylmethioninamine (decarboxy-AdoMet) to putrescine (1,4-diaminobutane) to yield spermidine. The chain is Polyamine aminopropyltransferase from Prochlorococcus marinus subsp. pastoris (strain CCMP1986 / NIES-2087 / MED4).